A 498-amino-acid chain; its full sequence is Trichoplein keratin filament-binding protein (498 aa).

A coiled-coil region spans residues 11–39 (CSQQRLNQQLARQREQEARLRQQWEQNSR). Glycyl lysine isopeptide (Lys-Gly) (interchain with G-Cter in ubiquitin) cross-links involve residues K50 and K57. Coiled coils occupy residues 66–136 (AYQR…LIAE), 163–353 (VNSW…LREE), and 380–479 (LTGR…EAET). The interval 73 to 498 (KEEKRRSLEA…PYGHPKIAWN (426 aa)) is interaction with keratin proteins. The interval 167-189 (EMQKEEKKQQEATAEQENKRYEN) is disordered. Basic and acidic residues predominate over residues 168-189 (MQKEEKKQQEATAEQENKRYEN). Positions 259 to 425 (KQMEAFRQKA…RELARREKEE (167 aa)) are trichohyalin/plectin homology domain. The disordered stretch occupies residues 447–498 (QAWEADQQEEEEEEEARRVEQLSDALLQQEAETMAEQGYRPKPYGHPKIAWN).

The protein belongs to the TCHP family. Interacts specifically with keratin proteins including, KRT5, KRT6A, KRT8, KRT14, KRT16 and KRT18. Interacts with KCTD17. Ubiquitinated. Ubiquitination by the BCR(KCTD17) E3 ubiquitin ligase complex results in proteasomal degradation, and induces ciliogenesis. In terms of tissue distribution, expressed at high levels in normal urothelial and breast epithelial cells. Also expressed in the smooth muscle and endothelial cells. Reduced expression seen in advanced bladder and breast carcinomas (at protein level). Ubiquitous. Expressed at highest levels in the heart, skeletal muscle, kidney, liver and testis.

The protein resides in the cytoplasm. The protein localises to the cytoskeleton. It localises to the cell membrane. Its subcellular location is the mitochondrion. It is found in the cell junction. The protein resides in the desmosome. The protein localises to the microtubule organizing center. It localises to the centrosome. In terms of biological role, tumor suppressor which has the ability to inhibit cell growth and be pro-apoptotic during cell stress. Inhibits cell growth in bladder and prostate cancer cells by a down-regulation of HSPB1 by inhibiting its phosphorylation. May act as a 'capping' or 'branching' protein for keratin filaments in the cell periphery. May regulate K8/K18 filament and desmosome organization mainly at the apical or peripheral regions of simple epithelial cells. Is a negative regulator of ciliogenesis. The chain is Trichoplein keratin filament-binding protein from Homo sapiens (Human).